A 440-amino-acid polypeptide reads, in one-letter code: 2-alpha-hydroxytaxane 2-O-benzoyltransferase (440 aa).

Catalysis depends on proton acceptor residues histidine 158 and aspartate 367.

Belongs to the plant acyltransferase family.

The catalysed reaction is 10-deacetyl-2-debenzoylbaccatin III + benzoyl-CoA = 10-deacetylbaccatin III + CoA. The protein operates within alkaloid biosynthesis; taxol biosynthesis; baccatin III from 10-deacetyl-2-debenzoylbaccatin III: step 1/2. Catalyzes the conversion of 2-debenzoyl-7,13-diacetylbaccatin III, a semisynthetic substrate, to 7,13-diacetylbaccatin III. This is 2-alpha-hydroxytaxane 2-O-benzoyltransferase from Taxus cuspidata (Japanese yew).